The sequence spans 1185 residues: Ubiquitin carboxyl-terminal hydrolase 36 (1185 aa).

Residues 126–169 (TGKALSSNGHDNTNGVNGSSAATVNGNRKQTVEQSNQNSTTNPN) show a composition bias toward polar residues. A disordered region spans residues 126–174 (TGKALSSNGHDNTNGVNGSSAATVNGNRKQTVEQSNQNSTTNPNELPKP). Residues 199-509 (AGMLNVGNTC…NAYIMFYELD (311 aa)) form the USP domain. Cysteine 208 functions as the Nucleophile in the catalytic mechanism. The Proton acceptor role is filled by histidine 468. Serine 552 and serine 554 each carry phosphoserine. The segment covering 642 to 658 (ANSNKSSCNNNTLTTNS) has biased composition (low complexity). Disordered stretches follow at residues 642 to 804 (ANSN…TDAI), 818 to 975 (HRAT…YQSE), 1056 to 1122 (APTL…GSFP), and 1136 to 1185 (NKFK…QQQS). Residues 670–683 (SDEEDEDEDSDDDV) are compositionally biased toward acidic residues. At threonine 716 the chain carries Phosphothreonine. A phosphoserine mark is found at serine 726 and serine 728. 2 stretches are compositionally biased toward low complexity: residues 778–797 (KSNG…SNNN) and 836–853 (QQQQ…SLIS). A Phosphoserine modification is found at serine 867. Position 870 is a phosphothreonine (threonine 870). Serine 873 carries the post-translational modification Phosphoserine. Positions 891–920 (DDNDDDDEDADEEDDADADAEQEEYDDEVV) are enriched in acidic residues. Polar residues-rich tracts occupy residues 924-942 (TTPS…SKPS) and 959-975 (SAKS…YQSE). Threonine 925 carries the post-translational modification Phosphothreonine. The span at 1062–1071 (EAREQRKRDA) shows a compositional bias: basic and acidic residues. 2 stretches are compositionally biased toward low complexity: residues 1151–1161 (QQQRALQRHLA) and 1172–1185 (QSTG…QQQS).

The protein belongs to the peptidase C19 family. As to quaternary structure, interacts with atms/PAF1, but not with CycT.

Its subcellular location is the nucleus. The protein localises to the nucleolus. It carries out the reaction Thiol-dependent hydrolysis of ester, thioester, amide, peptide and isopeptide bonds formed by the C-terminal Gly of ubiquitin (a 76-residue protein attached to proteins as an intracellular targeting signal).. Its function is as follows. Required for maintaining multiple types of adult stem cells, including male and female germline, epithelial follicle cell and intestinal stem cells. May function as a transcriptional repressor by continually deubiquiting histone H2B at the promoters of genes critical for cellular differentiation, thereby preventing histone H3 'Lys-4' trimethylation (H3K4). Controls selective autophagy activation by ubiquitinated proteins. The polypeptide is Ubiquitin carboxyl-terminal hydrolase 36 (Usp36) (Drosophila mojavensis (Fruit fly)).